The chain runs to 206 residues: 3-isopropylmalate dehydratase small subunit (206 aa).

The protein belongs to the LeuD family. LeuD type 1 subfamily. As to quaternary structure, heterodimer of LeuC and LeuD.

It carries out the reaction (2R,3S)-3-isopropylmalate = (2S)-2-isopropylmalate. The protein operates within amino-acid biosynthesis; L-leucine biosynthesis; L-leucine from 3-methyl-2-oxobutanoate: step 2/4. Functionally, catalyzes the isomerization between 2-isopropylmalate and 3-isopropylmalate, via the formation of 2-isopropylmaleate. The polypeptide is 3-isopropylmalate dehydratase small subunit (Leptospira interrogans serogroup Icterohaemorrhagiae serovar copenhageni (strain Fiocruz L1-130)).